The sequence spans 207 residues: Probable isochorismatase (207 aa).

It belongs to the isochorismatase family.

It catalyses the reaction isochorismate + H2O = (2S,3S)-2,3-dihydroxy-2,3-dihydrobenzoate + pyruvate. It functions in the pathway antibiotic biosynthesis; phenazine biosynthesis. Involved in the biosynthesis of the antibiotic phenazine, a nitrogen-containing heterocyclic molecule having important roles in virulence, competition and biological control. This isochorismatase may remove pyruvate from chorismate during the formation of the phenazine ring structure and/or stabilize the phenazine biosynthetic complex. This is Probable isochorismatase (phzA) from Pseudomonas chlororaphis (Pseudomonas aureofaciens).